A 122-amino-acid polypeptide reads, in one-letter code: Large ribosomal subunit protein uL18 (122 aa).

Residues 1 to 19 (MSTLSRKQKTQKRHKRLRR) are compositionally biased toward basic residues. The segment at 1-26 (MSTLSRKQKTQKRHKRLRRNLSGTDQ) is disordered.

It belongs to the universal ribosomal protein uL18 family. In terms of assembly, part of the 50S ribosomal subunit; part of the 5S rRNA/L5/L18/L25 subcomplex. Contacts the 5S and 23S rRNAs.

Its function is as follows. This is one of the proteins that bind and probably mediate the attachment of the 5S RNA into the large ribosomal subunit, where it forms part of the central protuberance. The polypeptide is Large ribosomal subunit protein uL18 (Prochlorococcus marinus (strain SARG / CCMP1375 / SS120)).